Consider the following 424-residue polypeptide: Riboflavin biosynthesis protein RibBA (424 aa).

Residues 1-204 (MTRFDSIERA…IADLIAWRRK (204 aa)) form a DHBP synthase region. Residues 28-29 (RE), Asp33, 141-145 (RPGHT), and Glu165 contribute to the D-ribulose 5-phosphate site. Glu29 is a Mg(2+) binding site. His144 is a Mg(2+) binding site. The GTP cyclohydrolase II stretch occupies residues 205-424 (HEKHVLRIAE…QNTAQPGTAL (220 aa)). 259–263 (RVHSE) contacts GTP. Zn(2+) is bound by residues Cys264, Cys275, and Cys277. GTP-binding positions include Gln280, 303 to 305 (EGR), and Thr325. Asp337 serves as the catalytic Proton acceptor; for GTP cyclohydrolase activity. The active-site Nucleophile; for GTP cyclohydrolase activity is the Arg339. Thr360 and Lys365 together coordinate GTP.

In the N-terminal section; belongs to the DHBP synthase family. It in the C-terminal section; belongs to the GTP cyclohydrolase II family. The cofactor is Mg(2+). Requires Mn(2+) as cofactor. It depends on Zn(2+) as a cofactor.

It catalyses the reaction D-ribulose 5-phosphate = (2S)-2-hydroxy-3-oxobutyl phosphate + formate + H(+). The catalysed reaction is GTP + 4 H2O = 2,5-diamino-6-hydroxy-4-(5-phosphoribosylamino)-pyrimidine + formate + 2 phosphate + 3 H(+). It functions in the pathway cofactor biosynthesis; riboflavin biosynthesis; 2-hydroxy-3-oxobutyl phosphate from D-ribulose 5-phosphate: step 1/1. It participates in cofactor biosynthesis; riboflavin biosynthesis; 5-amino-6-(D-ribitylamino)uracil from GTP: step 1/4. Functionally, catalyzes the conversion of D-ribulose 5-phosphate to formate and 3,4-dihydroxy-2-butanone 4-phosphate. Its function is as follows. Catalyzes the conversion of GTP to 2,5-diamino-6-ribosylamino-4(3H)-pyrimidinone 5'-phosphate (DARP), formate and pyrophosphate. The polypeptide is Riboflavin biosynthesis protein RibBA (Rhodococcus erythropolis (strain PR4 / NBRC 100887)).